The following is a 313-amino-acid chain: Protein-methionine-sulfoxide reductase catalytic subunit MsrP (313 aa).

Residues 1–45 (MPAYRPPHIASSEITPKSFYLSRRNFLGTAAGLAAIGLAGREAIA) constitute a signal peptide (tat-type signal). Mo-molybdopterin contacts are provided by residues asparagine 71, 74 to 75 (YE), cysteine 128, threonine 163, asparagine 213, arginine 218, and 229 to 231 (GIK).

This sequence belongs to the MsrP family. Heterodimer of a catalytic subunit (MsrP) and a heme-binding subunit (MsrQ). It depends on Mo-molybdopterin as a cofactor. Predicted to be exported by the Tat system. The position of the signal peptide cleavage has not been experimentally proven.

It localises to the periplasm. The enzyme catalyses L-methionyl-[protein] + a quinone + H2O = L-methionyl-(S)-S-oxide-[protein] + a quinol. The catalysed reaction is L-methionyl-[protein] + a quinone + H2O = L-methionyl-(R)-S-oxide-[protein] + a quinol. Functionally, part of the MsrPQ system that repairs oxidized periplasmic proteins containing methionine sulfoxide residues (Met-O), using respiratory chain electrons. Thus protects these proteins from oxidative-stress damage caused by reactive species of oxygen and chlorine generated by the host defense mechanisms. MsrPQ is essential for the maintenance of envelope integrity under bleach stress, rescuing a wide series of structurally unrelated periplasmic proteins from methionine oxidation. The catalytic subunit MsrP is non-stereospecific, being able to reduce both (R-) and (S-) diastereoisomers of methionine sulfoxide. The polypeptide is Protein-methionine-sulfoxide reductase catalytic subunit MsrP (Agrobacterium fabrum (strain C58 / ATCC 33970) (Agrobacterium tumefaciens (strain C58))).